The chain runs to 93 residues: U12-lycotoxin-Ls1d (93 aa).

An N-terminal signal peptide occupies residues 1–18; it reads MKFAVILLFSLVVLAVAS. A propeptide spanning residues 19–38 is cleaved from the precursor; sequence ESVEEVRREIDIEDLPEQQR.

Belongs to the neurotoxin 31 family. Contains 5 disulfide bonds. In terms of tissue distribution, expressed by the venom gland.

It localises to the secreted. In Lycosa singoriensis (Wolf spider), this protein is U12-lycotoxin-Ls1d.